The sequence spans 82 residues: RNA-binding protein Hfq (82 aa).

In terms of domain architecture, Sm spans 11–71 (DTFLNHVRKT…ISTIMPGAPI (61 aa)).

The protein belongs to the Hfq family. Homohexamer.

In terms of biological role, RNA chaperone that binds small regulatory RNA (sRNAs) and mRNAs to facilitate mRNA translational regulation in response to envelope stress, environmental stress and changes in metabolite concentrations. Also binds with high specificity to tRNAs. This chain is RNA-binding protein Hfq, found in Rhodopseudomonas palustris (strain TIE-1).